The sequence spans 220 residues: Uracil-DNA glycosylase 1 (220 aa).

D65 acts as the Proton acceptor in catalysis.

This sequence belongs to the uracil-DNA glycosylase (UDG) superfamily. UNG family.

The protein resides in the cytoplasm. The enzyme catalyses Hydrolyzes single-stranded DNA or mismatched double-stranded DNA and polynucleotides, releasing free uracil.. Functionally, excises uracil residues from the DNA which can arise as a result of misincorporation of dUMP residues by DNA polymerase or due to deamination of cytosine. In Bacteroides fragilis (strain ATCC 25285 / DSM 2151 / CCUG 4856 / JCM 11019 / LMG 10263 / NCTC 9343 / Onslow / VPI 2553 / EN-2), this protein is Uracil-DNA glycosylase 1.